The chain runs to 214 residues: Thymidylate kinase (214 aa).

An ATP-binding site is contributed by 7–14 (GIEGAGKT).

It belongs to the thymidylate kinase family.

The catalysed reaction is dTMP + ATP = dTDP + ADP. Phosphorylation of dTMP to form dTDP in both de novo and salvage pathways of dTTP synthesis. This is Thymidylate kinase from Desulfosudis oleivorans (strain DSM 6200 / JCM 39069 / Hxd3) (Desulfococcus oleovorans).